Here is a 558-residue protein sequence, read N- to C-terminus: Outer membrane transporter CdiB (558 aa).

An N-terminal signal peptide occupies residues 1–25; it reads MFVSSRKTGLIVCFSLIGYTASAFS. A coiled-coil region spans residues 34–62; it reads NETQQRQSEVIEQSRQQREALQQLNNIVQ. One can recognise a POTRA domain in the interval 76–151; that stretch reads FTLREIRFNH…GVLQLEILEG (76 aa).

The protein belongs to the TPS (TC 1.B.20) family.

It is found in the cell outer membrane. Probable outer membrane protein component of a toxin-immunity protein module, which functions as a cellular contact-dependent growth inhibition (CDI) system. CDI modules allow bacteria to communicate with and inhibit the growth of closely related neighboring bacteria in a contact-dependent fashion. This protein may be required for secretion and assembly of the CdiA toxin. In terms of biological role, probable member of a two partner secretion pathway (TPS) in which it mediates the secretion of CdiA. This Dickeya dadantii (strain 3937) (Erwinia chrysanthemi (strain 3937)) protein is Outer membrane transporter CdiB (cdiB).